The sequence spans 209 residues: APC/C-CDH1 modulator 1 (209 aa).

Residues 1 to 38 are disordered; that stretch reads MISPSKKRTILSSKNINQKPRAVVKGNELRSPSKRRSQ. The residue at position 48 (Ser-48) is a Phosphoserine. The residue at position 161 (Thr-161) is a Phosphothreonine. Ser-202 is subject to Phosphoserine.

Interacts with CDH1, BMH1 and BMH2.

Its function is as follows. Negative regulator of GDH1, the activator protein that regulates the ubiquitin ligase activity and substrate specificity of the anaphase promoting complex/cyclosome (APC/C), and which is required for exit from mitosis, cytokinesis and formation of prereplicative complexes in G1. This is APC/C-CDH1 modulator 1 (ACM1) from Saccharomyces cerevisiae (strain ATCC 204508 / S288c) (Baker's yeast).